A 603-amino-acid polypeptide reads, in one-letter code: Sulfite reductase [NADPH] flavoprotein alpha-component (603 aa).

The Flavodoxin-like domain occupies 64 to 202; sequence ITLISASQTG…QAETWRAAIV (139 aa). FMN contacts are provided by residues 70–75, 117–120, and 153–162; these read SQTGNA, STQG, and LGDSSYEHFA. The FAD-binding FR-type domain maps to 236–452; that stretch reads EAPLTAHLAL…IEHNDNFRLP (217 aa). FAD-binding positions include T326, L360, 390–393, 408–410, Y414, and 423–426; these read RLYS, TVG, and GGAS. Residues 523–524, 529–533, and D565 contribute to the NADP(+) site; these read SR and KIYVQ. Y603 contributes to the FAD binding site.

The protein belongs to the NADPH-dependent sulphite reductase flavoprotein subunit CysJ family. It in the N-terminal section; belongs to the flavodoxin family. This sequence in the C-terminal section; belongs to the flavoprotein pyridine nucleotide cytochrome reductase family. Alpha(8)-beta(8). The alpha component is a flavoprotein, the beta component is a hemoprotein. Requires FAD as cofactor. FMN serves as cofactor.

The catalysed reaction is hydrogen sulfide + 3 NADP(+) + 3 H2O = sulfite + 3 NADPH + 4 H(+). Its pathway is sulfur metabolism; hydrogen sulfide biosynthesis; hydrogen sulfide from sulfite (NADPH route): step 1/1. Functionally, component of the sulfite reductase complex that catalyzes the 6-electron reduction of sulfite to sulfide. This is one of several activities required for the biosynthesis of L-cysteine from sulfate. The flavoprotein component catalyzes the electron flow from NADPH -&gt; FAD -&gt; FMN to the hemoprotein component. The protein is Sulfite reductase [NADPH] flavoprotein alpha-component of Sodalis glossinidius (strain morsitans).